A 223-amino-acid chain; its full sequence is uncharacterized protein (223 aa).

The region spanning 5 to 116 (RILIVEDDVM…ELLLRMRNML (112 aa)) is the Response regulatory domain. A 4-aspartylphosphate modification is found at aspartate 52. A DNA-binding region (ompR/PhoB-type) is located at residues 121–219 (GTFTQIKHLY…IYGEGYRLNT (99 aa)).

In terms of processing, phosphorylated by YbdK.

The protein resides in the cytoplasm. Member of the two-component regulatory system YbdK/YbdJ. This is an uncharacterized protein from Bacillus subtilis (strain 168).